The primary structure comprises 90 residues: Small ribosomal subunit protein uS17 (90 aa).

This sequence belongs to the universal ribosomal protein uS17 family. In terms of assembly, part of the 30S ribosomal subunit.

Its function is as follows. One of the primary rRNA binding proteins, it binds specifically to the 5'-end of 16S ribosomal RNA. In Methylobacillus flagellatus (strain ATCC 51484 / DSM 6875 / VKM B-1610 / KT), this protein is Small ribosomal subunit protein uS17.